A 740-amino-acid chain; its full sequence is Phosphoribosylformylglycinamidine synthase subunit PurL (740 aa).

The active site involves His53. 2 residues coordinate ATP: Tyr56 and Lys95. Position 97 (Glu97) interacts with Mg(2+). Substrate-binding positions include 98 to 101 (SHNH) and Arg120. The active-site Proton acceptor is the His99. A Mg(2+)-binding site is contributed by Asp121. Substrate is bound at residue Gln244. Asp274 contributes to the Mg(2+) binding site. 318 to 320 (ESQ) contributes to the substrate binding site. ATP-binding residues include Asp501 and Gly538. Asn539 contributes to the Mg(2+) binding site. Ser541 is a binding site for substrate.

This sequence belongs to the FGAMS family. In terms of assembly, monomer. Part of the FGAM synthase complex composed of 1 PurL, 1 PurQ and 2 PurS subunits.

The protein localises to the cytoplasm. The enzyme catalyses N(2)-formyl-N(1)-(5-phospho-beta-D-ribosyl)glycinamide + L-glutamine + ATP + H2O = 2-formamido-N(1)-(5-O-phospho-beta-D-ribosyl)acetamidine + L-glutamate + ADP + phosphate + H(+). It participates in purine metabolism; IMP biosynthesis via de novo pathway; 5-amino-1-(5-phospho-D-ribosyl)imidazole from N(2)-formyl-N(1)-(5-phospho-D-ribosyl)glycinamide: step 1/2. Its function is as follows. Part of the phosphoribosylformylglycinamidine synthase complex involved in the purines biosynthetic pathway. Catalyzes the ATP-dependent conversion of formylglycinamide ribonucleotide (FGAR) and glutamine to yield formylglycinamidine ribonucleotide (FGAM) and glutamate. The FGAM synthase complex is composed of three subunits. PurQ produces an ammonia molecule by converting glutamine to glutamate. PurL transfers the ammonia molecule to FGAR to form FGAM in an ATP-dependent manner. PurS interacts with PurQ and PurL and is thought to assist in the transfer of the ammonia molecule from PurQ to PurL. The chain is Phosphoribosylformylglycinamidine synthase subunit PurL from Lactobacillus delbrueckii subsp. bulgaricus (strain ATCC 11842 / DSM 20081 / BCRC 10696 / JCM 1002 / NBRC 13953 / NCIMB 11778 / NCTC 12712 / WDCM 00102 / Lb 14).